The sequence spans 478 residues: Zinc metalloproteinase/disintegrin (478 aa).

The signal sequence occupies residues 1 to 20 (MIEVLLVTICLAVFPYPGSS). Positions 21-190 (IILESGNVDD…KASQLYLTPE (170 aa)) are excised as a propeptide. Glutamine 191 bears the Pyrrolidone carboxylic acid mark. The Peptidase M12B domain maps to 197–392 (RYIELAIVVD…SKPQCIINAP (196 aa)). Positions 200 and 284 each coordinate Ca(2+). 3 disulfide bridges follow: cysteine 308/cysteine 387, cysteine 349/cysteine 371, and cysteine 351/cysteine 354. Histidine 333 is a Zn(2+) binding site. The active site involves glutamate 334. Zn(2+) contacts are provided by histidine 337 and histidine 343. Positions 387 and 390 each coordinate Ca(2+). Positions 393 to 410 (LRTDTVSTPVSGNEFLEA) are excised as a propeptide. In terms of domain architecture, Disintegrin spans 400–478 (TPVSGNEFLE…GQSADCPRNS (79 aa)). Intrachain disulfides connect cysteine 414/cysteine 429, cysteine 416/cysteine 424, cysteine 423/cysteine 446, cysteine 437/cysteine 443, cysteine 442/cysteine 467, and cysteine 455/cysteine 474. The short motif at 459–461 (RGD) is the Cell attachment site element. Residues 459-478 (RGDNPDDRCTGQSADCPRNS) form a disordered region. Residues 468–478 (TGQSADCPRNS) show a composition bias toward polar residues.

Belongs to the venom metalloproteinase (M12B) family. P-II subfamily. P-IIa sub-subfamily. As to quaternary structure, monomer. The cofactor is Zn(2+). Post-translationally, not N-glycosylated. As to expression, expressed by the venom gland.

Its subcellular location is the secreted. The catalysed reaction is Cleavage of 3-Asn-|-Gln-4, 10-His-|-Leu-11 and 14-Ala-|-Leu-15 in the insulin B chain, and the bond Z-Gly-Pro-|-Leu-Gly-Pro in a small molecule substrate of microbial collagenase.. Zinc protease that induces hemorrhage. In terms of biological role, inhibits platelet aggregation induced by ADP, thrombin, and collagen. Acts by inhibiting fibrinogen interaction with platelet receptors GPIIb/GPIIIa (ITGA2B/ITGB3). This Protobothrops flavoviridis (Habu) protein is Zinc metalloproteinase/disintegrin.